The primary structure comprises 127 residues: Fluoride-specific ion channel FluC (127 aa).

4 helical membrane-spanning segments follow: residues 4 to 24, 35 to 55, 71 to 91, and 101 to 121; these read IMLAVFLGGGTGSVLRWWLGL, VGTLTANLAGAFIIGAGLAWF, TGLCGGLTTFSTFSAEVVFLL, and LNVALNLFGSFMMTALAFWLF. Na(+) is bound by residues G75 and T78.

The protein belongs to the fluoride channel Fluc/FEX (TC 1.A.43) family.

The protein resides in the cell inner membrane. The enzyme catalyses fluoride(in) = fluoride(out). Its activity is regulated as follows. Na(+) is not transported, but it plays an essential structural role and its presence is essential for fluoride channel function. Functionally, fluoride-specific ion channel. Important for reducing fluoride concentration in the cell, thus reducing its toxicity. In Cronobacter sakazakii (strain ATCC BAA-894) (Enterobacter sakazakii), this protein is Fluoride-specific ion channel FluC.